The sequence spans 181 residues: Large ribosomal subunit protein uL6 (181 aa).

It belongs to the universal ribosomal protein uL6 family. As to quaternary structure, part of the 50S ribosomal subunit.

Functionally, this protein binds to the 23S rRNA, and is important in its secondary structure. It is located near the subunit interface in the base of the L7/L12 stalk, and near the tRNA binding site of the peptidyltransferase center. The sequence is that of Large ribosomal subunit protein uL6 from Ruthia magnifica subsp. Calyptogena magnifica.